The chain runs to 219 residues: 7-cyano-7-deazaguanine synthase (219 aa).

10–20 contacts ATP; it reads FSGGQDSTTCL. Zn(2+) is bound by residues C188, C196, C199, and C202.

It belongs to the QueC family. Zn(2+) is required as a cofactor.

It catalyses the reaction 7-carboxy-7-deazaguanine + NH4(+) + ATP = 7-cyano-7-deazaguanine + ADP + phosphate + H2O + H(+). It participates in purine metabolism; 7-cyano-7-deazaguanine biosynthesis. Functionally, catalyzes the ATP-dependent conversion of 7-carboxy-7-deazaguanine (CDG) to 7-cyano-7-deazaguanine (preQ(0)). In Neisseria gonorrhoeae (strain NCCP11945), this protein is 7-cyano-7-deazaguanine synthase.